We begin with the raw amino-acid sequence, 287 residues long: Nucleotide-binding protein MXAN_6564 (287 aa).

Gly-13–Ser-20 provides a ligand contact to ATP. A GTP-binding site is contributed by Asp-62–Glu-65.

It belongs to the RapZ-like family.

Its function is as follows. Displays ATPase and GTPase activities. In Myxococcus xanthus (strain DK1622), this protein is Nucleotide-binding protein MXAN_6564.